Consider the following 299-residue polypeptide: RING-H2 finger protein ATL20 (299 aa).

Residues 172–192 traverse the membrane as a helical segment; that stretch reads LIITLCIIGGITATCIAAIRI. The RING-type; atypical zinc-finger motif lies at 253–295; sequence CPICLSEYASKETVRCMPECDHCFHVQCIDEWLKIHSSCPVCR.

The protein belongs to the RING-type zinc finger family. ATL subfamily.

It is found in the membrane. The enzyme catalyses S-ubiquitinyl-[E2 ubiquitin-conjugating enzyme]-L-cysteine + [acceptor protein]-L-lysine = [E2 ubiquitin-conjugating enzyme]-L-cysteine + N(6)-ubiquitinyl-[acceptor protein]-L-lysine.. The protein operates within protein modification; protein ubiquitination. The chain is RING-H2 finger protein ATL20 (ATL20) from Arabidopsis thaliana (Mouse-ear cress).